We begin with the raw amino-acid sequence, 303 residues long: ATP phosphoribosyltransferase (303 aa).

The protein belongs to the ATP phosphoribosyltransferase family. Long subfamily. Requires Mg(2+) as cofactor.

The protein resides in the cytoplasm. It carries out the reaction 1-(5-phospho-beta-D-ribosyl)-ATP + diphosphate = 5-phospho-alpha-D-ribose 1-diphosphate + ATP. The protein operates within amino-acid biosynthesis; L-histidine biosynthesis; L-histidine from 5-phospho-alpha-D-ribose 1-diphosphate: step 1/9. With respect to regulation, feedback inhibited by histidine. Functionally, catalyzes the condensation of ATP and 5-phosphoribose 1-diphosphate to form N'-(5'-phosphoribosyl)-ATP (PR-ATP). Has a crucial role in the pathway because the rate of histidine biosynthesis seems to be controlled primarily by regulation of HisG enzymatic activity. This chain is ATP phosphoribosyltransferase, found in Haemophilus influenzae (strain PittEE).